The following is a 357-amino-acid chain: Acyl-coenzyme A diphosphatase NUDT19 (357 aa).

The Nudix hydrolase domain occupies Ala-10–Glu-242. A disordered region spans residues Pro-72 to Ala-94. Pro residues predominate over residues Pro-78–Pro-87. Residues Ala-97–Gly-118 carry the Nudix box motif. Mg(2+)-binding residues include Glu-112 and Glu-116. Lys-300 carries the N6-succinyllysine modification. The short motif at Ala-355–Leu-357 is the Microbody targeting signal element.

The protein belongs to the Nudix hydrolase family. In terms of assembly, monomer. The cofactor is Mg(2+). Mn(2+) is required as a cofactor.

The protein localises to the peroxisome. The catalysed reaction is an acyl-CoA + H2O = an acyl-4'-phosphopantetheine + adenosine 3',5'-bisphosphate + 2 H(+). It carries out the reaction CoA + H2O = (R)-4'-phosphopantetheine + adenosine 3',5'-bisphosphate + 2 H(+). It catalyses the reaction hexanoyl-CoA + H2O = hexanoyl-4'-phosphopantetheine + adenosine 3',5'-bisphosphate + 2 H(+). The enzyme catalyses octanoyl-CoA + H2O = S-octanoyl-4'-phosphopantetheine + adenosine 3',5'-bisphosphate + 2 H(+). The catalysed reaction is butanoyl-CoA + H2O = S-butanoyl-4'-phosphopantetheine + adenosine 3',5'-bisphosphate + 2 H(+). It carries out the reaction propanoyl-CoA + H2O = propanoyl-4'-phosphopantetheine + adenosine 3',5'-bisphosphate + 2 H(+). It catalyses the reaction malonyl-CoA + H2O = malonyl-4'-phosphopantetheine + adenosine 3',5'-bisphosphate + 2 H(+). The enzyme catalyses succinyl-CoA + H2O = succinyl-4'-phosphopantetheine + adenosine 3',5'-bisphosphate + 2 H(+). The catalysed reaction is choloyl-CoA + H2O = S-choloyl-4'-phosphopantetheine + adenosine 3',5'-bisphosphate + 2 H(+). It carries out the reaction 4,8-dimethylnonanoyl-CoA + H2O = S-(4,8-dimethylnonanoyl)-4'-phosphopantetheine + adenosine 3',5'-bisphosphate + 2 H(+). It catalyses the reaction (9Z,12Z,15Z)-octadecatrienoyl-CoA + H2O = S-(9Z,12Z,15Z-octadecatrienoyl)-4'-phosphopantetheine + adenosine 3',5'-bisphosphate + 2 H(+). The enzyme catalyses (9Z,12Z)-octadecadienoyl-CoA + H2O = S-(9Z,12Z-octadecadienoyl)-4'-phosphopantetheine + adenosine 3',5'-bisphosphate + 2 H(+). The catalysed reaction is (9Z)-hexadecenoyl-CoA + H2O = S-(9Z-hexadecenoyl)-4'-phosphopantetheine + adenosine 3',5'-bisphosphate + 2 H(+). It carries out the reaction (9Z)-tetradecenoyl-CoA + H2O = S-(9Z-tetradecenoyl)-4'-phosphopantetheine + adenosine 3',5'-bisphosphate + 2 H(+). It catalyses the reaction (6Z)-octenoyl-CoA + H2O = S-(6Z-octenoyl)-4'-phosphopantetheine + adenosine 3',5'-bisphosphate + 2 H(+). The enzyme catalyses hexadecanoyl-CoA + H2O = S-hexadecanoyl-4'-phosphopantetheine + adenosine 3',5'-bisphosphate + 2 H(+). The catalysed reaction is tetradecanoyl-CoA + H2O = tetradecanoyl-4'-phosphopantetheine + adenosine 3',5'-bisphosphate + 2 H(+). It carries out the reaction dodecanoyl-CoA + H2O = S-dodecanoyl-4'-phosphopantetheine + adenosine 3',5'-bisphosphate + 2 H(+). It catalyses the reaction a 5'-end CoA-ribonucleoside in mRNA + H2O = a 5'-end phospho-adenosine-phospho-ribonucleoside in mRNA + (R)-4'-phosphopantetheine + 2 H(+). In terms of biological role, fatty acyl-coenzyme A (CoA) diphosphatase that hydrolyzes fatty acyl-CoA to yield acyl-4'-phosphopantetheine and adenosine 3',5'-bisphosphate. Mediates the hydrolysis of a wide range of CoA esters, including choloyl-CoA and branched-chain fatty-acyl-CoA esters and at low substrate concentrations medium and long-chain fatty-acyl-CoA esters are the primary substrates. Highest activity seen with medium-chain acyl-CoA esters and higher rates of activity seen with the unsaturated acyl-CoA esters compared with the saturated esters. Exhibits decapping activity towards dpCoA-capped RNAs in vitro. In Mus caroli (Ryukyu mouse), this protein is Acyl-coenzyme A diphosphatase NUDT19 (Nudt19).